Here is a 1868-residue protein sequence, read N- to C-terminus: MSISSDEAKEKQLVEKAELRLAIADSPQKFETNLQTFLPPLLLKLASPHASVRTAVFSALKNLISRINTLPQVQLPVRALIVQAKEPNLAAQQDSTNVRLYSLLLASKGIDRLSLQDRQQLLPLVVSNISCLTGTVAARMFHILLKLILEWVAPQESSHEQEEFVQFLQLDNDGFSFLMRQFTRFFLLVPSKQVQVSQQPLSRGYTCPGLSLTDVAFFTYDAGVTFNKEQLNKFKKAIFQFVCRGMAATQTIEQSPRMIELMEFLCVVSTDSTNLSDDAAQFMKRFPMPYENEEFITFLQTLYIGNTANGRPPVKAILQEKILSILNRSHFATTKAECISLICSIGLHSSEYKLRSLTLSFIRHVAKLNYKNLNPASSSPSSTDFSTCIVSLIRNNLHAEGWPKLQLGPQTPAFNTAILQRQLQYETLGDILKRDFELVSDLSYIEFLFESLKNDLPQFRSSIQESLLSLVGHLSILPQQSKLKLKNLLRKNLSIDEQQREDNNDAVNSIMALKFVSIKFTNAAFPFHDPEARLFNIWGTVRTNRFDIIEESFKGLQPFWFRVNNASINTSATVKTSDLLGSHLSETEFPPFREFLQVLIDQLDSEAASITRKSLNNAVRFSKQCLISNAIYGKKTMVIQDEDWSVRIDKALELDDTVVSRVNEMVQGMNDDIFIRYLTLLSNEFTATNSKGEQIAIFPYQDPIFGSVLLTLLNFVSNNVLRRLEILVPDLYHLVIMKFQSLSDNDLAVCATIIGIISTAIADSTHVKRITKIAQSQTMAETYVASYVVPRLYLKDQTNHIESDSILNLLNILTTHLSHPGTNKDMILKLVCQVTKFGLLLQVSAQERKDFLKKVMDTIQDKLINDVTAIQTWSYLSLYSTDLENSSLFQEKLLETNVSKQNDFLFSVGESLSVVAGKWSSKYLIKQIDIPNFNVEIMQQKFPATNVTTILDEIFSGCDSTKPSLRKASCIWLLSYIQYLGHLPEVSSKCNDIHLRFMRFLADRDEFIQDSAARGLSLVYEIGGSDLKESMVKGLLKSFTESTAGSASTSATGISGSVSEETELFEPGVLNTGDGSISTYKDILNLASEVGDPALVYKFMSLAKSSALWSSRKGIAFGLGAIMSKSSLEELLLKDQQTAKKLIPKLYRYRFDPFQAVSRSMTDIWNTLIPESSLTISLYFNDILDELLCGMANKEWRVREASTSALLQLIQSQPQEKFSEKMLKIWTMAFRTMDDIKDSVREVGTKFTTVLAKILARSIDVEKGVNPTKSKEILDNILPFLWGPHGLNSDAEEVRNFALTTLIDLVKHSPGAIKPFTPKLIYDFITLFSSIEPQVINYLALNAANYNIDANVIDTQRKNGVTNSPLFQTIEKLINNSDDCMMEEIINVVIKASRKSVGLPSKVASSLVIIILVKRYSIEMKPYSGKLLKVCLTMFEDRNESVNIAFAISMGYLFKVSALDKCIKYSEKLITKYFEPTSTENNKKVVGTAIDSILNYAKSEFDNVASVFMPLIFIACNDEDKDLETLYNKIWTEASSSGAGTVKLYLPEILNVLCVNIKSNDFSIRKTCAKSVIQLCGGINDSIPYPQIVKLFDISREALSGRSWDGKEHIVAALVSLTEKFSQTVADNNDLQESINHVMYTEVSRKSMKYVKKILPLYARYINVNPQEETITFLIEKAKEMIRLLGSESDDSEGSIKQTSDESTIKRIKPNTEITQKSSKENIENEEYVINLLKVSVDICNNSKSRYPMNLLEFIIDEIAYLFHNDRIIHTWRTQLAASEIGISIVGRFSTISSADFIQNVGRLWDQTFPINCNKETIENVKLQMIKFGGLIIQKIPSLQNNIEENLRLLNSIDSTSRIELELKNIGL.

The residue at position 2 (serine 2) is an N-acetylserine. HEAT repeat units follow at residues 32-69, 116-153, 256-292, 313-351, 384-422, 439-476, 590-627, 707-745, 748-780, 781-818, 846-885, 945-982, 988-1025, 1030-1067, 1137-1174, 1178-1215, 1272-1311, 1361-1398, 1422-1459, 1503-1540, 1544-1581, and 1649-1687; these read TNLQTFLPPLLLKLASPHASVRTAVFSALKNLISRINT, QDRQQLLPLVVSNISCLTGTVAARMFHILLKLILEWVA, PRMIELMEFLCVVSTDSTNLSDDAAQFMKRFPMPYEN, PVKAILQEKILSILNRSHFATTKAECISLICSIGLHSSE, DFSTCIVSLIRNNLHAEGWPKLQLGPQTPAFNTAILQRQ, VSDLSYIEFLFESLKNDLPQFRSSIQESLLSLVGHLSI, PPFREFLQVLIDQLDSEAASITRKSLNNAVRFSKQCLI, SVLLTLLNFVSNNVLRRLEILVPDLYHLVIMKFQSLSDN, AVCATIIGIISTAIADSTHVKRITKIAQSQTMA, ETYVASYVVPRLYLKDQTNHIESDSILNLLNILTTHLS, QERKDFLKKVMDTIQDKLINDVTAIQTWSYLSLYSTDLEN, TNVTTILDEIFSGCDSTKPSLRKASCIWLLSYIQYLGH, SKCNDIHLRFMRFLADRDEFIQDSAARGLSLVYEIGGS, SMVKGLLKSFTESTAGSASTSATGISGSVSEETELFEP, QTAKKLIPKLYRYRFDPFQAVSRSMTDIWNTLIPESSL, LYFNDILDELLCGMANKEWRVREASTSALLQLIQSQPQ, EILDNILPFLWGPHGLNSDAEEVRNFALTTLIDLVKHSPG, VTNSPLFQTIEKLINNSDDCMMEEIINVVIKASRKSVG, PYSGKLLKVCLTMFEDRNESVNIAFAISMGYLFKVSAL, NVASVFMPLIFIACNDEDKDLETLYNKIWTEASSSGAG, LYLPEILNVLCVNIKSNDFSIRKTCAKSVIQLCGGIND, and KYVKKILPLYARYINVNPQEETITFLIEKAKEMIRLLGS. Phosphoserine is present on serine 1692. HEAT repeat units follow at residues 1746–1785 and 1830–1867; these read RYPMNLLEFIIDEIAYLFHNDRIIHTWRTQLAASEIGISI and GLIIQKIPSLQNNIEENLRLLNSIDSTSRIELELKNIG.

It belongs to the ECM29 family. Component of the proteasome. ECM29 binds to both proteasome 19S and 20S particles.

Its subcellular location is the cytoplasm. It localises to the nucleus. Its function is as follows. Stabilizes the proteasome holoenzyme, probably by tethering the 20S proteolytic core particle and the 19S regulatory particle. The proteasome is a multicatalytic proteinase complex which is characterized by its ability to cleave peptides with Arg, Phe, Tyr, Leu, and Glu adjacent to the leaving group at neutral or slightly basic pH. The proteasome has an ATP-dependent proteolytic activity. The protein is Proteasome component ECM29 (ECM29) of Saccharomyces cerevisiae (strain ATCC 204508 / S288c) (Baker's yeast).